The primary structure comprises 201 residues: LexA repressor (201 aa).

The H-T-H motif DNA-binding region spans R28 to K48. Active-site for autocatalytic cleavage activity residues include S118 and K155.

The protein belongs to the peptidase S24 family. Homodimer.

The catalysed reaction is Hydrolysis of Ala-|-Gly bond in repressor LexA.. Functionally, represses a number of genes involved in the response to DNA damage (SOS response), including recA and lexA. In the presence of single-stranded DNA, RecA interacts with LexA causing an autocatalytic cleavage which disrupts the DNA-binding part of LexA, leading to derepression of the SOS regulon and eventually DNA repair. The chain is LexA repressor from Photorhabdus laumondii subsp. laumondii (strain DSM 15139 / CIP 105565 / TT01) (Photorhabdus luminescens subsp. laumondii).